Here is a 273-residue protein sequence, read N- to C-terminus: Large ribosomal subunit protein uL2 (273 aa).

Disordered stretches follow at residues 35-54 and 222-273; these read DKKDKSGGRNNNGRITTRHI and GMAM…RRNK. Residues 229-239 show a composition bias toward basic and acidic residues; the sequence is DHPHGGGEGRN. Basic residues predominate over residues 253–273; that stretch reads KGFKTRKNKRTDKYIVRRRNK.

This sequence belongs to the universal ribosomal protein uL2 family. In terms of assembly, part of the 50S ribosomal subunit. Forms a bridge to the 30S subunit in the 70S ribosome.

In terms of biological role, one of the primary rRNA binding proteins. Required for association of the 30S and 50S subunits to form the 70S ribosome, for tRNA binding and peptide bond formation. It has been suggested to have peptidyltransferase activity; this is somewhat controversial. Makes several contacts with the 16S rRNA in the 70S ribosome. This is Large ribosomal subunit protein uL2 from Aeromonas hydrophila subsp. hydrophila (strain ATCC 7966 / DSM 30187 / BCRC 13018 / CCUG 14551 / JCM 1027 / KCTC 2358 / NCIMB 9240 / NCTC 8049).